We begin with the raw amino-acid sequence, 264 residues long: uncharacterized protein (264 aa).

A helical membrane pass occupies residues 7 to 27 (LTLGICLVLLIILIVGYVIMT).

The protein belongs to the staphylococcal tandem lipoprotein family.

The protein localises to the cell membrane. This is an uncharacterized protein from Staphylococcus aureus (strain N315).